We begin with the raw amino-acid sequence, 273 residues long: Tryptase (273 aa).

Residues 1–18 form the signal peptide; that stretch reads MLKLLLLTLPLLSSLVHA. A propeptide spans 19–28 (activation peptide); that stretch reads APGPAMTREG. The 242-residue stretch at 29–270 folds into the Peptidase S1 domain; that stretch reads IVGGQEAHGN…YLDWIHHYVP (242 aa). N49 is a glycosylation site (N-linked (GlcNAc...) asparagine). C57 and C73 are oxidised to a cystine. Active-site charge relay system residues include H72 and D119. N130 is a glycosylation site (N-linked (GlcNAc...) asparagine). 3 cysteine pairs are disulfide-bonded: C153–C228, C186–C209, and C218–C246. S222 serves as the catalytic Charge relay system.

It belongs to the peptidase S1 family. Tryptase subfamily.

The catalysed reaction is Preferential cleavage: Arg-|-Xaa, Lys-|-Xaa, but with more restricted specificity than trypsin.. Its function is as follows. Tryptase is the major neutral protease present in mast cells and is secreted upon the coupled activation-degranulation response of this cell type. May play a role in innate immunity. This is Tryptase (Tpsab1) from Mus musculus (Mouse).